The primary structure comprises 165 residues: Nucleotide-binding protein A9601_05361 (165 aa).

It belongs to the YajQ family.

Its function is as follows. Nucleotide-binding protein. This chain is Nucleotide-binding protein A9601_05361, found in Prochlorococcus marinus (strain AS9601).